A 411-amino-acid chain; its full sequence is MEAFLQKAKQASRAIATLLPQRRNEILRAMAGAIRESQEMILNVNALDLKEAQASGLKGSMLERLALDGPKIAGMARAIEEIAMLRNPLGRIVDGWVVENGLRIEKVSTPIGVVGIIYESRPNVTSDTAALCFKSGNVCVLKGGKEAKRSNEAIASVMQAVLKANNLPIEAISLLPDASREGVAKLVKMDQYVDLIVPRGGNALISFVSENATIPVIKHDKGLCHLYIHEEADFAKALPIVINAKTQRPSVCNAIETLLVDETIHERFLLELRPLLEEKGTEIRGCEKSLKILGGKRASEEDFHTEYGENILNVRVVKGFEEALEHIAIYGSQHSESIITQNHSIAERFLEEVDASSVYVNASTRFTDGGEFGFGAEVGISTSKLHARGPMGINELTTYKFKIYGEGQIRK.

It belongs to the gamma-glutamyl phosphate reductase family.

It is found in the cytoplasm. It catalyses the reaction L-glutamate 5-semialdehyde + phosphate + NADP(+) = L-glutamyl 5-phosphate + NADPH + H(+). It participates in amino-acid biosynthesis; L-proline biosynthesis; L-glutamate 5-semialdehyde from L-glutamate: step 2/2. Its function is as follows. Catalyzes the NADPH-dependent reduction of L-glutamate 5-phosphate into L-glutamate 5-semialdehyde and phosphate. The product spontaneously undergoes cyclization to form 1-pyrroline-5-carboxylate. The sequence is that of Gamma-glutamyl phosphate reductase from Wolinella succinogenes (strain ATCC 29543 / DSM 1740 / CCUG 13145 / JCM 31913 / LMG 7466 / NCTC 11488 / FDC 602W) (Vibrio succinogenes).